The sequence spans 434 residues: Nucleobase transporter PlUacP (434 aa).

12 consecutive transmembrane segments (helical) span residues 9-29 (LGFQ…LIVG), 39-59 (LAYL…LQVW), 63-83 (FFGI…GPMI), 93-113 (AIYG…GFFG), 118-138 (FFPP…LIPV), 159-179 (ALSF…TGFI), 181-201 (AISI…MGKV), 218-238 (FYFG…LVAI), 306-326 (VVIT…IAAL), 327-347 (TLLI…GMVV), 365-385 (LLII…PNLF), and 394-414 (ILTS…NFLF).

It belongs to the nucleobase:cation symporter-2 (NCS2) (TC 2.A.40) family.

It localises to the cell membrane. Inhibited by the proton gradient disruptor carbonyl cyanide m-chlorophenylhydrazone (CCCP), but not by the sodium gradient disruptor ouabain. Hypoxanthine, xanthine, cytosine and uric acid act as competitive inhibitors. In terms of biological role, uptake of the purines adenine and guanine, and the pyrimidine uracil. Transport is probably proton-dependent. The polypeptide is Nucleobase transporter PlUacP (Paenibacillus larvae subsp. larvae (strain NRRL B-3650 / LMG 16245)).